A 591-amino-acid polypeptide reads, in one-letter code: Uncoordinated protein 58 (591 aa).

Residues 1 to 24 (MFFYSPNVAPQPSSTSHRRPTLTH) form a disordered region. Residues 184–204 (VILVSVLIGYLCLGAWILMLL) traverse the membrane as a helical segment. The N-linked (GlcNAc...) asparagine glycan is linked to Asn-226. The next 5 helical transmembrane spans lie at 289–309 (TFPTAILYVLTVLTTCGYGEV), 318–338 (VFSVAFALVGIPLMFITAADI), 400–420 (PIGAYVSCICIYCSIGSAMFI), 428–448 (FIHAFHFGFNLIVTVGLGDIV), and 453–473 (IFLSLIVAFVIVGLSVVTMCV).

Belongs to the two pore domain potassium channel (TC 1.A.1.8) family.

It localises to the membrane. Has a role in mobility, possibly in the transport of potassium in muscles. This chain is Uncoordinated protein 58, found in Caenorhabditis elegans.